We begin with the raw amino-acid sequence, 246 residues long: NLP effector protein 2 (246 aa).

The signal sequence occupies residues 1–19 (MKFVVFLCAIAAVVATIQG). The Conserved undecapeptide motif I motif lies at 113–123 (AIMYSWYFPKD). The Hepta-peptide GHRHDWE motif II motif lies at 130-136 (GHRHDWE).

It belongs to the Necrosis inducing protein (NPP1) family.

Its subcellular location is the secreted. In terms of biological role, secreted effector that contributes strongly to virulence during infection by P.capsici. Causes large necrotic areas in both host C.annuum and non-host N.benthamiana. This chain is NLP effector protein 2, found in Phytophthora capsici.